Reading from the N-terminus, the 110-residue chain is Late cornified envelope-like proline-rich protein 1 (110 aa).

The interval 1–24 (MSSDDKNKPGEPKNEPKQCDPGCE) is disordered.

Belongs to the cornifin (SPRR) family.

The polypeptide is Late cornified envelope-like proline-rich protein 1 (LELP1) (Bos taurus (Bovine)).